The chain runs to 515 residues: Bifunctional purine biosynthesis protein PurH (515 aa).

Residues 1 to 145 form the MGS-like domain; the sequence is MTKRALISVS…KNHASVTVVV (145 aa).

Belongs to the PurH family.

The catalysed reaction is (6R)-10-formyltetrahydrofolate + 5-amino-1-(5-phospho-beta-D-ribosyl)imidazole-4-carboxamide = 5-formamido-1-(5-phospho-D-ribosyl)imidazole-4-carboxamide + (6S)-5,6,7,8-tetrahydrofolate. It catalyses the reaction IMP + H2O = 5-formamido-1-(5-phospho-D-ribosyl)imidazole-4-carboxamide. The protein operates within purine metabolism; IMP biosynthesis via de novo pathway; 5-formamido-1-(5-phospho-D-ribosyl)imidazole-4-carboxamide from 5-amino-1-(5-phospho-D-ribosyl)imidazole-4-carboxamide (10-formyl THF route): step 1/1. It participates in purine metabolism; IMP biosynthesis via de novo pathway; IMP from 5-formamido-1-(5-phospho-D-ribosyl)imidazole-4-carboxamide: step 1/1. The polypeptide is Bifunctional purine biosynthesis protein PurH (Streptococcus pyogenes serotype M3 (strain ATCC BAA-595 / MGAS315)).